The following is a 206-amino-acid chain: Small ribosomal subunit protein uS4 (206 aa).

The S4 RNA-binding domain maps to 98 to 163; that stretch reads MRLDNVVYRL…SEKFKTFVEN (66 aa).

The protein belongs to the universal ribosomal protein uS4 family. As to quaternary structure, part of the 30S ribosomal subunit. Contacts protein S5. The interaction surface between S4 and S5 is involved in control of translational fidelity.

In terms of biological role, one of the primary rRNA binding proteins, it binds directly to 16S rRNA where it nucleates assembly of the body of the 30S subunit. Functionally, with S5 and S12 plays an important role in translational accuracy. The sequence is that of Small ribosomal subunit protein uS4 from Clostridium botulinum (strain Alaska E43 / Type E3).